Reading from the N-terminus, the 344-residue chain is uncharacterized protein (344 aa).

This is an uncharacterized protein from Caenorhabditis elegans.